The sequence spans 152 residues: Cytochrome c oxidase subunit 5A, mitochondrial (152 aa).

The transit peptide at 1 to 43 directs the protein to the mitochondrion; the sequence is MLGTALRRCAVAAAAASRAGPRGLLHPAPAPGPAAAIQSIRCY. Residues 2–22 carry the SIFI-degron motif; it reads LGTALRRCAVAAAAASRAGPR. Lysine 89 and lysine 115 each carry N6-acetyllysine. Phosphothreonine is present on threonine 143.

This sequence belongs to the cytochrome c oxidase subunit 5A family. In terms of assembly, component of the cytochrome c oxidase (complex IV, CIV), a multisubunit enzyme composed of 14 subunits. The complex is composed of a catalytic core of 3 subunits MT-CO1, MT-CO2 and MT-CO3, encoded in the mitochondrial DNA, and 11 supernumerary subunits COX4I, COX5A, COX5B, COX6A, COX6B, COX6C, COX7A, COX7B, COX7C, COX8 and NDUFA4, which are encoded in the nuclear genome. The complex exists as a monomer or a dimer and forms supercomplexes (SCs) in the inner mitochondrial membrane with NADH-ubiquinone oxidoreductase (complex I, CI) and ubiquinol-cytochrome c oxidoreductase (cytochrome b-c1 complex, complex III, CIII), resulting in different assemblies (supercomplex SCI(1)III(2)IV(1) and megacomplex MCI(2)III(2)IV(2)). Interacts with AFG1L. Interacts with RAB5IF. In response to mitochondrial stress, the precursor protein is ubiquitinated by the SIFI complex in the cytoplasm before mitochondrial import, leading to its degradation. Within the SIFI complex, UBR4 initiates ubiquitin chain that are further elongated or branched by KCMF1.

The protein localises to the mitochondrion inner membrane. It functions in the pathway energy metabolism; oxidative phosphorylation. Component of the cytochrome c oxidase, the last enzyme in the mitochondrial electron transport chain which drives oxidative phosphorylation. The respiratory chain contains 3 multisubunit complexes succinate dehydrogenase (complex II, CII), ubiquinol-cytochrome c oxidoreductase (cytochrome b-c1 complex, complex III, CIII) and cytochrome c oxidase (complex IV, CIV), that cooperate to transfer electrons derived from NADH and succinate to molecular oxygen, creating an electrochemical gradient over the inner membrane that drives transmembrane transport and the ATP synthase. Cytochrome c oxidase is the component of the respiratory chain that catalyzes the reduction of oxygen to water. Electrons originating from reduced cytochrome c in the intermembrane space (IMS) are transferred via the dinuclear copper A center (CU(A)) of subunit 2 and heme A of subunit 1 to the active site in subunit 1, a binuclear center (BNC) formed by heme A3 and copper B (CU(B)). The BNC reduces molecular oxygen to 2 water molecules using 4 electrons from cytochrome c in the IMS and 4 protons from the mitochondrial matrix. The chain is Cytochrome c oxidase subunit 5A, mitochondrial (COX5A) from Eulemur fulvus fulvus (Brown lemur).